Reading from the N-terminus, the 526-residue chain is Choline/ethanolamine transporter FLVCR2 (526 aa).

A disordered region spans residues 1–70; sequence MVNEGPNQEE…PSGLAHPSSS (70 aa). At 1–76 the chain is on the cytoplasmic side; that stretch reads MVNEGPNQEE…PSSSGPEDLS (76 aa). 1–84 is a binding site for heme b; sequence MVNEGPNQEE…LSVIKVSRRR (84 aa). 5 tandem repeats follow at residues 25–30, 31–36, 37–42, 43–48, and 49–54. Positions 25 to 56 are enriched in low complexity; sequence PSVSVHPSVSVHPSVSINPSVSVHPSSSAHPS. Residues 25–72 form an 8 X 6 AA tandem repeats of P-S-[VS]-S-[VIAG]-[HNP] region; the sequence is PSVSVHPSVSVHPSVSINPSVSVHPSSSAHPSALAQPSGLAHPSSSGP. The 6; approximate repeat unit spans residues 55 to 60; it reads PSALAQ. A 7; approximate repeat occupies 61–66; the sequence is PSGLAH. Copy 8 of the repeat occupies 67–72; it reads PSSSGP. Residues 77–101 form a helical membrane-spanning segment; it reads VIKVSRRRWAVVLVFSCYSMCNSFQ. Choline is bound by residues N98 and W102. Residues 102–119 lie on the Extracellular side of the membrane; it reads WIQYGSINNIFMHFYGVS. Residues 120 to 147 traverse the membrane as a helical segment; sequence AFAIDWLSMCYMLTYIPLLLPVAWLLEK. The Cytoplasmic portion of the chain corresponds to 148–149; that stretch reads FG. Residues 150–169 form a helical membrane-spanning segment; the sequence is LRTIALTGSALNCLGAWVKL. Residues 170 to 176 lie on the Extracellular side of the membrane; that stretch reads GSLKPHL. Residues 177 to 205 traverse the membrane as a helical segment; it reads FPVTVVGQLICSVAQVFILGMPSRIASVW. Choline is bound by residues Q191 and L195. The Cytoplasmic portion of the chain corresponds to 206 to 210; the sequence is FGANE. A helical membrane pass occupies residues 211–236; that stretch reads VSTACSVAVFGNQLGIAIGFLVPPVL. At 237-241 the chain is on the extracellular side; the sequence is VPNIE. A helical membrane pass occupies residues 242–271; it reads DRDELAYHISIMFYIIGGVATLLLILVIIV. Residues 272–307 lie on the Cytoplasmic side of the membrane; sequence FKEKPKYPPSRAQSLSYALTSPDASYLGSIARLFKN. The chain crosses the membrane as a helical span at residues 308–338; the sequence is LNFVLLVITYGLNAGAFYALSTLLNRMVIWH. Y325 contacts choline. The Extracellular portion of the chain corresponds to 339 to 342; it reads YPGE. A helical membrane pass occupies residues 343–371; that stretch reads EVNAGRIGLTIVIAGMLGAVISGIWLDRS. The Cytoplasmic segment spans residues 372-373; the sequence is KT. Residues 374 to 396 traverse the membrane as a helical segment; the sequence is YKETTLVVYIMTLVGMVVYTFTL. Over 397–399 the chain is Extracellular; the sequence is NLG. A helical transmembrane segment spans residues 400 to 429; it reads HLWVVFITAGTMGFFMTGYLPLGFEFAVEL. At 430–437 the chain is on the cytoplasmic side; it reads TYPESEGI. The helical transmembrane segment at 438-463 threads the bilayer; that stretch reads SSGLLNISAQVFGIIFTISQGQIIDN. Residue Q447 coordinates choline. The Extracellular segment spans residues 464–465; sequence YG. The helical transmembrane segment at 466–488 threads the bilayer; the sequence is TKPGNIFLCVFLTLGAALTAFIK. The Cytoplasmic portion of the chain corresponds to 489-526; the sequence is ADLRRQKANKETLENKLQEEEEESNTSKVPTAVSEDHL. The segment at 500-526 is disordered; sequence TLENKLQEEEEESNTSKVPTAVSEDHL. At S515 the chain carries Phosphoserine.

This sequence belongs to the major facilitator superfamily. Feline leukemia virus subgroup C receptor (TC 2.A.1.28.1) family. Interacts with components of electron transfer chain complexes III, IV and V including CYC1, NDUFA4, COX4I1, ATP5PD and ATP5F1C; these interactions occur in the absence of heme and are disrupted upon heme binding. Interacts with ATP2A2; this interaction occurs in the absence of heme and promotes ATP2A2 proteasomal degradation; the complex is dissociated upon heme binding. Interacts with HMOX1; this interaction is potentiated in the presence of heme. Expressed in non-hematopoietic tissues, with relative abundant expression in brain, placenta, lung, liver and kidney. Also expressed in hematopoietic tissues (fetal liver, spleen, lymph node, thymus, leukocytes and bone marrow). Found in acidophil cells of the pituitary that secrete growth hormone and prolactin (at protein level).

The protein resides in the cell membrane. It is found in the mitochondrion membrane. Its subcellular location is the endoplasmic reticulum membrane. It catalyses the reaction choline(out) = choline(in). It carries out the reaction ethanolamine(in) = ethanolamine(out). The catalysed reaction is heme b(in) = heme b(out). Functionally, choline uniporter that specifically mediates choline uptake at the blood-brain-barrier. Responsible for the majority of choline uptake across the blood-brain-barrier from the circulation into the brain. Choline, a nutrient critical for brain development, is a precursor of phosphatidylcholine, as well as betaine. Also mediates transport of ethanolamine. Choline and ethanolamine transport is not coupled with proton transport and is exclusively driven by the choline gradient across the plasma membrane. However, the presence of an inwardly directed proton gradient enhances choline uptake. Also acts as a heme b transporter. Required to regulate mitochondrial respiration processes, ATP synthesis and thermogenesis. At low heme levels, interacts with components of electron transfer chain (ETC) complexes and ATP2A2, leading to ubiquitin-mediated degradation of ATP2A2 and inhibition of thermogenesis. Upon heme binding, dissociates from ETC complexes to allow switching from mitochondrial ATP synthesis to thermogenesis. This Homo sapiens (Human) protein is Choline/ethanolamine transporter FLVCR2.